A 200-amino-acid chain; its full sequence is Tegument protein UL55 homolog (200 aa).

Over residues 1–20 (MLPANRAEHSSDAEPRDIGS) the composition is skewed to basic and acidic residues. The segment at 1-23 (MLPANRAEHSSDAEPRDIGSHGR) is disordered.

This sequence belongs to the alphaherpesvirinae HHV-1 UL55 family.

It is found in the virion tegument. Its subcellular location is the host nucleus matrix. In Equine herpesvirus 1 (strain Ab4p) (EHV-1), this protein is Tegument protein UL55 homolog.